The primary structure comprises 348 residues: Actin maturation protease (348 aa).

Over residues M1–T18 the composition is skewed to pro residues. A disordered region spans residues M1–F64. Over residues N34 to S48 the composition is skewed to low complexity. A compositionally biased stretch (pro residues) spans V49–R60. The segment at S121–G241 is peptidase C39-like. The active site involves C129. A Phosphoserine modification is found at S313.

It belongs to the ACTMAP family. Interacts (via N-terminus) with PFN2; the interaction may facilitate efficient cleavage of the acetylated N-terminus of immature actin. Interacts with PFN1.

It localises to the cytoplasm. It catalyses the reaction N-terminal N(alpha)-acetyl-L-methionyl-L-aspartyl-[protein] + H2O = N-terminal L-aspartyl-[protein] + N-acetyl-L-methionine. The catalysed reaction is N-terminal N(alpha)-acetyl-L-methionyl-L-glutamyl-[protein] + H2O = N-terminal L-glutamyl-[protein] + N-acetyl-L-methionine. It carries out the reaction N-terminal N(alpha)-acetyl-L-cysteinyl-L-aspartyl-[protein] + H2O = N-terminal L-aspartyl-[protein] + N-acetyl-L-cysteine. The enzyme catalyses N-terminal N(alpha)-acetyl-L-cysteinyl-L-glutamyl-[protein] + H2O = N-terminal L-glutamyl-[protein] + N-acetyl-L-cysteine. Its function is as follows. Actin maturation protease that specifically mediates the cleavage of immature acetylated N-terminal actin, thereby contributing to actin maturation. Cleaves N-terminal acetylated methionine of immature cytoplasmic beta- and gamma-actins ACTB and ACTG1 after translation. Cleaves N-terminal acetylated cysteine of muscle alpha-actins ACTA1, ACTC1 and ACTA2 after canonical removal of N-terminal methionine. This chain is Actin maturation protease, found in Bos taurus (Bovine).